Reading from the N-terminus, the 294-residue chain is 4-hydroxy-tetrahydrodipicolinate synthase (294 aa).

Pyruvate is bound at residue T47. Y135 serves as the catalytic Proton donor/acceptor. Residue K164 is the Schiff-base intermediate with substrate of the active site. V206 contributes to the pyruvate binding site.

Belongs to the DapA family. In terms of assembly, homotetramer; dimer of dimers.

It is found in the cytoplasm. The enzyme catalyses L-aspartate 4-semialdehyde + pyruvate = (2S,4S)-4-hydroxy-2,3,4,5-tetrahydrodipicolinate + H2O + H(+). The protein operates within amino-acid biosynthesis; L-lysine biosynthesis via DAP pathway; (S)-tetrahydrodipicolinate from L-aspartate: step 3/4. Functionally, catalyzes the condensation of (S)-aspartate-beta-semialdehyde [(S)-ASA] and pyruvate to 4-hydroxy-tetrahydrodipicolinate (HTPA). In Lachnoclostridium phytofermentans (strain ATCC 700394 / DSM 18823 / ISDg) (Clostridium phytofermentans), this protein is 4-hydroxy-tetrahydrodipicolinate synthase.